Reading from the N-terminus, the 141-residue chain is Putative pre-16S rRNA nuclease (141 aa).

The protein belongs to the YqgF nuclease family.

It localises to the cytoplasm. Functionally, could be a nuclease involved in processing of the 5'-end of pre-16S rRNA. The protein is Putative pre-16S rRNA nuclease of Aliivibrio salmonicida (strain LFI1238) (Vibrio salmonicida (strain LFI1238)).